Reading from the N-terminus, the 81-residue chain is CLAVATA3/ESR (CLE)-related protein 12 (81 aa).

Residues 1-31 form the signal peptide; the sequence is MENSNKVPISKIGLIMLMIFSTFFMSPHARR. Positions 55 to 67 are enriched in basic and acidic residues; sequence KRSRTDLEDKAVP. Positions 55–81 are disordered; that stretch reads KRSRTDLEDKAVPGDRLSPGGPNHIHN. 2 positions are modified to hydroxyproline: Pro73 and Pro76. Residue Pro76 is glycosylated (O-linked (Ara...) hydroxyproline).

The protein belongs to the CLV3/ESR signal peptide family. The O-glycosylation (arabinosylation) of the hydroxyproline Pro-76 enhances binding affinity of the CLE12p peptide for its receptor. In terms of tissue distribution, expressed in young nodules throughout the central tissue. Expressed in the apical region of elongated nodules, corresponding to the meristematic and early infection zones.

Its subcellular location is the secreted. The protein resides in the extracellular space. Its function is as follows. Signaling peptide involved in the regulation of nodulation. Moves from root to shoot to function with the receptor kinase SUNN, in a signaling pathway that plays roles during cellular differentiation, both at the onset of nodulation, and later during nodule meristem development and subsequent homeostasis. Interacts with SUNN signaling to control nodule numbers. SUNN is involved in the autoregulation of nodulation (AON), a long distance systemic signaling from root to shoot and back again, which allows legumes to limit the number of root nodules formed based on available nitrogen and previous rhizobial colonization. This Medicago truncatula (Barrel medic) protein is CLAVATA3/ESR (CLE)-related protein 12.